The chain runs to 163 residues: Probable cobalt-precorrin-6B C(15)-methyltransferase (decarboxylating) (163 aa).

S-adenosyl-L-methionine-binding positions include Thr-6, 30–34 (GCGSG), Asp-51, and Gly-75.

Belongs to the methyltransferase superfamily. Archaeal-type CbiT family.

The catalysed reaction is Co-precorrin-6B + S-adenosyl-L-methionine = Co-precorrin-7 + S-adenosyl-L-homocysteine + CO2. Its pathway is cofactor biosynthesis; adenosylcobalamin biosynthesis; cob(II)yrinate a,c-diamide from sirohydrochlorin (anaerobic route): step 8/10. Catalyzes the methylation of C-15 in cobalt-precorrin-6B followed by the decarboxylation of C-12 to form cobalt-precorrin-7. This is Probable cobalt-precorrin-6B C(15)-methyltransferase (decarboxylating) from Archaeoglobus fulgidus (strain ATCC 49558 / DSM 4304 / JCM 9628 / NBRC 100126 / VC-16).